Reading from the N-terminus, the 309-residue chain is Dicarboxylate carrier UCP2 (309 aa).

Residues 1 to 16 (MVGFKATDVPPTATVK) lie on the Mitochondrial intermembrane side of the membrane. Solcar repeat units follow at residues 11-106 (PTAT…VKQF), 114-203 (AGIG…IKDA), and 212-297 (DDLP…LKRA). The interval 16–63 (KFLGAGTAACIADLITFPLDTAKVRLQIQGERQGPVRAAASAQYRGVL) is important for interaction with long-chain fatty acids. The helical transmembrane segment at 17 to 40 (FLGAGTAACIADLITFPLDTAKVR) threads the bilayer. At 41–77 (LQIQGERQGPVRAAASAQYRGVLCTILTMVRTEGPRS) the chain is on the mitochondrial matrix side. Residues 78–103 (LYSGLVAGLQRQMSFASVRIGLYDSV) form a helical membrane-spanning segment. Residues 104-119 (KQFYTKGSEHAGIGSR) are Mitochondrial intermembrane-facing. The chain crosses the membrane as a helical span at residues 120–145 (LLAGSTTGALAVAVAQPTDVVKVRFQ). Over 146–173 (AQARAGSGRRYQSTVDAYKTIAREEGFR) the chain is Mitochondrial matrix. The chain crosses the membrane as a helical span at residues 174-199 (GLWKGTSPNVARNAIVNCAELVTYDL). Residues 200–217 (IKDALLKANLMTDDLPCH) lie on the Mitochondrial intermembrane side of the membrane. A helical transmembrane segment spans residues 218-242 (FTSAFGAGFCTTVIASPVDVVKTRY). Over 243–268 (MNSALGQYSSAGHCALTMLQKEGPRA) the chain is Mitochondrial matrix. A helical membrane pass occupies residues 269–294 (FYKGFMPSFLRLGSWNVVMFVTYEQL). An important for interaction with long-chain fatty acids region spans residues 278-285 (LRLGSWNV). The Mitochondrial intermembrane portion of the chain corresponds to 295-309 (KRALMAACTSREAPF).

The protein belongs to the mitochondrial carrier (TC 2.A.29) family. As to quaternary structure, homotetramer. Adopts an asymmetrical dimer of dimers functional form. Interacts with MICU1 (when methylated); leading to decrease the calcium sensitivity of MICU1.

It is found in the mitochondrion inner membrane. The enzyme catalyses L-aspartate(out) + phosphate(in) + H(+)(in) = L-aspartate(in) + phosphate(out) + H(+)(out). It carries out the reaction oxaloacetate(out) + phosphate(in) + H(+)(in) = oxaloacetate(in) + phosphate(out) + H(+)(out). The catalysed reaction is (S)-malate(out) + phosphate(in) + H(+)(in) = (S)-malate(in) + phosphate(out) + H(+)(out). It catalyses the reaction malonate(out) + phosphate(in) + H(+)(in) = malonate(in) + phosphate(out) + H(+)(out). The enzyme catalyses sulfate(out) + phosphate(in) + H(+)(in) = sulfate(in) + phosphate(out) + H(+)(out). It carries out the reaction (S)-malate(out) = (S)-malate(in). The catalysed reaction is L-aspartate(out) = L-aspartate(in). It catalyses the reaction phosphate(in) = phosphate(out). The enzyme catalyses chloride(in) = chloride(out). It carries out the reaction H(+)(in) = H(+)(out). The catalysed reaction is a long-chain fatty acid(out) = a long-chain fatty acid(in). Antiporter that exports dicarboxylate intermediates of the Krebs cycle in exchange for phosphate plus a proton across the inner membrane of mitochondria, a process driven by mitochondrial motive force with an overall impact on glycolysis, glutaminolysis and glutathione-dependent redox balance. Continuous export of oxaloacetate and related four-carbon dicarboxylates from mitochondrial matrix into the cytosol negatively regulates the oxidation of acetyl-CoA substrates via the Krebs cycle lowering the ATP/ADP ratio and reactive oxygen species (ROS) production. May mediate inducible proton entry into the mitochondrial matrix affecting ATP turnover as a protection mechanism against oxidative stress. The proton currents are most likely associated with fatty acid flipping across the inner membrane of mitochondria in a metabolic process regulated by free fatty acids and purine nucleotides. Regulates the use of glucose as a source of energy. Required for glucose-induced DRP1-dependent mitochondrial fission and neuron activation in the ventromedial nucleus of the hypothalamus (VMH). This mitochondrial adaptation mechanism modulates the VMH pool of glucose-excited neurons with an impact on systemic glucose homeostasis. Regulates ROS levels and metabolic reprogramming of macrophages during the resolution phase of inflammation. Attenuates ROS production in response to IL33 to preserve the integrity of the Krebs cycle required for persistent production of itaconate and subsequent GATA3-dependent differentiation of inflammation-resolving alternatively activated macrophages. Can unidirectionally transport anions including L-malate, L-aspartate, phosphate and chloride ions. Does not mediate adaptive thermogenesis. This is Dicarboxylate carrier UCP2 (UCP2) from Canis lupus familiaris (Dog).